Here is a 126-residue protein sequence, read N- to C-terminus: Small ribosomal subunit protein bS6 (126 aa).

The tract at residues 99–126 (PLPAPRVVPGTEAPEPAQAAETPEPEAS) is disordered. Over residues 107–120 (PGTEAPEPAQAAET) the composition is skewed to low complexity.

It belongs to the bacterial ribosomal protein bS6 family.

In terms of biological role, binds together with bS18 to 16S ribosomal RNA. This chain is Small ribosomal subunit protein bS6, found in Synechococcus sp. (strain CC9902).